A 277-amino-acid chain; its full sequence is 4-hydroxy-3-methylbut-2-enyl diphosphate reductase (277 aa).

Position 12 (Cys-12) interacts with [4Fe-4S] cluster. The (2E)-4-hydroxy-3-methylbut-2-enyl diphosphate site is built by His-36 and His-70. The dimethylallyl diphosphate site is built by His-36 and His-70. His-36 and His-70 together coordinate isopentenyl diphosphate. Cys-92 serves as a coordination point for [4Fe-4S] cluster. His-120 contributes to the (2E)-4-hydroxy-3-methylbut-2-enyl diphosphate binding site. His-120 lines the dimethylallyl diphosphate pocket. Residue His-120 participates in isopentenyl diphosphate binding. Glu-122 serves as the catalytic Proton donor. Thr-158 is a binding site for (2E)-4-hydroxy-3-methylbut-2-enyl diphosphate. Residue Cys-186 participates in [4Fe-4S] cluster binding. Ser-214, Asn-216, and Ser-258 together coordinate (2E)-4-hydroxy-3-methylbut-2-enyl diphosphate. Residues Ser-214, Asn-216, and Ser-258 each coordinate dimethylallyl diphosphate. Residues Ser-214, Asn-216, and Ser-258 each coordinate isopentenyl diphosphate.

It belongs to the IspH family. It depends on [4Fe-4S] cluster as a cofactor.

The enzyme catalyses isopentenyl diphosphate + 2 oxidized [2Fe-2S]-[ferredoxin] + H2O = (2E)-4-hydroxy-3-methylbut-2-enyl diphosphate + 2 reduced [2Fe-2S]-[ferredoxin] + 2 H(+). The catalysed reaction is dimethylallyl diphosphate + 2 oxidized [2Fe-2S]-[ferredoxin] + H2O = (2E)-4-hydroxy-3-methylbut-2-enyl diphosphate + 2 reduced [2Fe-2S]-[ferredoxin] + 2 H(+). It participates in isoprenoid biosynthesis; dimethylallyl diphosphate biosynthesis; dimethylallyl diphosphate from (2E)-4-hydroxy-3-methylbutenyl diphosphate: step 1/1. Its pathway is isoprenoid biosynthesis; isopentenyl diphosphate biosynthesis via DXP pathway; isopentenyl diphosphate from 1-deoxy-D-xylulose 5-phosphate: step 6/6. In terms of biological role, catalyzes the conversion of 1-hydroxy-2-methyl-2-(E)-butenyl 4-diphosphate (HMBPP) into a mixture of isopentenyl diphosphate (IPP) and dimethylallyl diphosphate (DMAPP). Acts in the terminal step of the DOXP/MEP pathway for isoprenoid precursor biosynthesis. In Campylobacter jejuni subsp. jejuni serotype O:2 (strain ATCC 700819 / NCTC 11168), this protein is 4-hydroxy-3-methylbut-2-enyl diphosphate reductase.